We begin with the raw amino-acid sequence, 147 residues long: Cyanate hydratase (147 aa).

Residues R88, E91, and S114 contribute to the active site.

It belongs to the cyanase family.

It catalyses the reaction cyanate + hydrogencarbonate + 3 H(+) = NH4(+) + 2 CO2. Functionally, catalyzes the reaction of cyanate with bicarbonate to produce ammonia and carbon dioxide. The protein is Cyanate hydratase of Methylobacillus flagellatus (strain ATCC 51484 / DSM 6875 / VKM B-1610 / KT).